The chain runs to 186 residues: ATP synthase subunit delta, chloroplastic (186 aa).

This sequence belongs to the ATPase delta chain family. As to quaternary structure, F-type ATPases have 2 components, F(1) - the catalytic core - and F(0) - the membrane proton channel. F(1) has five subunits: alpha(3), beta(3), gamma(1), delta(1), epsilon(1). CF(0) has four main subunits: a(1), b(1), b'(1) and c(10-14). The alpha and beta chains form an alternating ring which encloses part of the gamma chain. F(1) is attached to F(0) by a central stalk formed by the gamma and epsilon chains, while a peripheral stalk is formed by the delta, b and b' chains.

Its subcellular location is the plastid. It localises to the chloroplast thylakoid membrane. In terms of biological role, f(1)F(0) ATP synthase produces ATP from ADP in the presence of a proton or sodium gradient. F-type ATPases consist of two structural domains, F(1) containing the extramembraneous catalytic core and F(0) containing the membrane proton channel, linked together by a central stalk and a peripheral stalk. During catalysis, ATP synthesis in the catalytic domain of F(1) is coupled via a rotary mechanism of the central stalk subunits to proton translocation. Its function is as follows. This protein is part of the stalk that links CF(0) to CF(1). It either transmits conformational changes from CF(0) to CF(1) or is implicated in proton conduction. This chain is ATP synthase subunit delta, chloroplastic, found in Pyropia yezoensis (Susabi-nori).